The primary structure comprises 460 residues: Ribosomal protein uS12 methylthiotransferase RimO (460 aa).

In terms of domain architecture, MTTase N-terminal spans 18-134; that stretch reads MKIHITSLGC…VTSIVAEVLR (117 aa). Residues Cys27, Cys63, Cys97, Cys171, Cys175, and Cys178 each coordinate [4Fe-4S] cluster. The 231-residue stretch at 157-387 folds into the Radical SAM core domain; it reads STPFHYAYVK…MVLQQEISLS (231 aa). The 67-residue stretch at 390–456 folds into the TRAM domain; that stretch reads QEWIGKTLEV…HYDLMGEAID (67 aa).

It belongs to the methylthiotransferase family. RimO subfamily. [4Fe-4S] cluster is required as a cofactor.

The protein resides in the cytoplasm. The catalysed reaction is L-aspartate(89)-[ribosomal protein uS12]-hydrogen + (sulfur carrier)-SH + AH2 + 2 S-adenosyl-L-methionine = 3-methylsulfanyl-L-aspartate(89)-[ribosomal protein uS12]-hydrogen + (sulfur carrier)-H + 5'-deoxyadenosine + L-methionine + A + S-adenosyl-L-homocysteine + 2 H(+). In terms of biological role, catalyzes the methylthiolation of an aspartic acid residue of ribosomal protein uS12. The sequence is that of Ribosomal protein uS12 methylthiotransferase RimO from Heliobacterium modesticaldum (strain ATCC 51547 / Ice1).